The sequence spans 436 residues: GTPase Der (436 aa).

EngA-type G domains follow at residues 4–167 and 174–350; these read PVVA…PEVE and VRVA…EQRT. GTP is bound by residues 10–17, 57–61, 120–123, 180–187, 227–231, and 292–295; these read GRPNVGKS, DTGGL, NKVD, DTAGL, and NKWD. In terms of domain architecture, KH-like spans 351–435; the sequence is RRISTSEVND…PLRIILRRKN (85 aa).

This sequence belongs to the TRAFAC class TrmE-Era-EngA-EngB-Septin-like GTPase superfamily. EngA (Der) GTPase family. In terms of assembly, associates with the 50S ribosomal subunit.

Functionally, GTPase that plays an essential role in the late steps of ribosome biogenesis. This Gemmatimonas aurantiaca (strain DSM 14586 / JCM 11422 / NBRC 100505 / T-27) protein is GTPase Der.